The following is a 201-amino-acid chain: AVPTETTTTCDGNHVHRLSCDIGVISVQTALYGREDSETCIEGKSLQQISNTECSLLGAVDVLKSRCDGKKVCELSTNIFRPSDPCSDTYKYLQTKYNCFPAIYLVTCEHSVAHLHCDVGQVISVYNADYGRNDHTTCSYERVPSQIQNRDCSNPTSKVAESCSGKNNCTIEASNLVFGDPCVGIYKYLEVAYVCQYPSIV.

Disulfide bonds link Cys-10–Cys-40, Cys-20–Cys-99, Cys-54–Cys-86, Cys-67–Cys-73, Cys-108–Cys-138, Cys-117–Cys-195, Cys-152–Cys-182, and Cys-163–Cys-169. SUEL-type lectin domains follow at residues 18 to 100 (LSCD…YNCF) and 107 to 196 (TCEH…YVCQ). N-linked (GlcNAc...) asparagine glycosylation is present at Asn-168.

As to quaternary structure, homodimer; non-covalently linked.

Functionally, rhamnose-binding lectin. Also binds melibiose, raffinose, D-galactose, L-arabinose, D-fucose, maltose and D-glucose with decreasing affinity. Does not bind D-arabinose, L-fucose, lactose, xylose or 2-deoxy-D-galactose. Shows strong hemagglutinating activity against rabbit erythrocytes. This Scomberomorus niphonius (Japanese Spanish mackerel) protein is L-rhamnose-binding lectin SML.